Reading from the N-terminus, the 319-residue chain is Beta-sarcoglycan (319 aa).

Over residues 1-10 (MAAAAAAAAA) the composition is skewed to low complexity. The disordered stretch occupies residues 1 to 33 (MAAAAAAAAAEQQSSNGPVKKSMREKAVERRNV). The Cytoplasmic portion of the chain corresponds to 1 to 66 (MAAAAAAAAA…GLRGRKGNLA (66 aa)). Residues 22-33 (SMREKAVERRNV) are compositionally biased toward basic and acidic residues. Residues 67 to 87 (ICVIILLFILAVINLIITLVI) form a helical; Signal-anchor for type II membrane protein membrane-spanning segment. Over 88–318 (WAVIRIGPNG…QISDNPCGNT (231 aa)) the chain is Extracellular. 3 N-linked (GlcNAc...) asparagine glycosylation sites follow: Asn-159, Asn-212, and Asn-259. Disulfide bonds link Cys-289–Cys-315 and Cys-291–Cys-308.

It belongs to the sarcoglycan beta/delta/gamma/zeta family. As to quaternary structure, cross-link to form 2 major subcomplexes: one consisting of SGCB, SGCD and SGCG and the other consisting of SGCB and SGCD. The association between SGCB and SGCG is particularly strong while SGCA is loosely associated with the other sarcoglycans. In terms of processing, disulfide bonds are present.

The protein resides in the cell membrane. The protein localises to the sarcolemma. It is found in the cytoplasm. Its subcellular location is the cytoskeleton. In terms of biological role, component of the sarcoglycan complex, a subcomplex of the dystrophin-glycoprotein complex which forms a link between the F-actin cytoskeleton and the extracellular matrix. The sequence is that of Beta-sarcoglycan (SGCB) from Pongo abelii (Sumatran orangutan).